Consider the following 138-residue polypeptide: uncharacterized protein (138 aa).

An HTH merR-type domain is found at leucine 3–aspartate 72. The segment at residues isoleucine 6–lysine 25 is a DNA-binding region (H-T-H motif).

This is an uncharacterized protein from Bacillus subtilis (strain 168).